The chain runs to 113 residues: U11-theraphotoxin-Hhn1a (113 aa).

Positions 1 to 21 (MNTVRVTFLLVFVLAVSLGQT) are cleaved as a signal peptide. The propeptide occupies 22-74 (DKDENRMEMQEKTEQGKSYLDFAENLLLQKLEELEAKLLEEDSEESRNSRQKR). Intrachain disulfides connect C75/C90, C82/C95, and C89/C110.

The protein belongs to the neurotoxin 14 (magi-1) family. 01 (HNTX-16) subfamily. Expressed by the venom gland.

It is found in the secreted. Its function is as follows. Probable ion channel inhibitor. The polypeptide is U11-theraphotoxin-Hhn1a (Cyriopagopus hainanus (Chinese bird spider)).